A 302-amino-acid polypeptide reads, in one-letter code: Urease accessory protein UreD (302 aa).

It belongs to the UreD family. In terms of assembly, ureD, UreF and UreG form a complex that acts as a GTP-hydrolysis-dependent molecular chaperone, activating the urease apoprotein by helping to assemble the nickel containing metallocenter of UreC. The UreE protein probably delivers the nickel.

Its subcellular location is the cytoplasm. Required for maturation of urease via the functional incorporation of the urease nickel metallocenter. This is Urease accessory protein UreD from Pseudoalteromonas translucida (strain TAC 125).